The sequence spans 763 residues: Heat shock 70 kDa protein 16 (763 aa).

Disordered regions lie at residues 509-529 and 701-763; these read ISEENHQSSAMKDGSLDPSSG and EKTT…MELD. Serine 528 is modified (phosphoserine). Over residues 701-714 the composition is skewed to basic and acidic residues; sequence EKTTEQESLPKDAN.

Belongs to the heat shock protein 70 (TC 1.A.33) family. HSP110/SSE subfamily.

This chain is Heat shock 70 kDa protein 16 (HSP70-16), found in Arabidopsis thaliana (Mouse-ear cress).